We begin with the raw amino-acid sequence, 167 residues long: UPF0225 protein VV1358 (167 aa).

The protein belongs to the UPF0225 family.

The chain is UPF0225 protein VV1358 from Vibrio vulnificus (strain YJ016).